A 215-amino-acid chain; its full sequence is Large ribosomal subunit protein bL25 (215 aa).

Residues Val-190–Glu-215 are disordered. A compositionally biased stretch (acidic residues) spans Asp-193–Pro-205. Over residues Glu-206–Glu-215 the composition is skewed to basic and acidic residues.

It belongs to the bacterial ribosomal protein bL25 family. CTC subfamily. As to quaternary structure, part of the 50S ribosomal subunit; part of the 5S rRNA/L5/L18/L25 subcomplex. Contacts the 5S rRNA. Binds to the 5S rRNA independently of L5 and L18.

In terms of biological role, this is one of the proteins that binds to the 5S RNA in the ribosome where it forms part of the central protuberance. The polypeptide is Large ribosomal subunit protein bL25 (Maricaulis maris (strain MCS10) (Caulobacter maris)).